Consider the following 387-residue polypeptide: MSADRIPSFSVAELNTAIGNLLERGFAPRFLVEATVSRPQLKKGHLWLTLTDGEASISAVAWASQLRQLRYRPEDGDGVTVVGKLNFWAARASLNVQVLDIRPSLSTVLRQFELVRRRLEEAGLLDITRRRPLPRQPRTLAVLTSVPSSALADMLRTASERWPMTRLLVVPIPVQGSVAARIREVLGRLAEEASALGLDALVLARGGGSREDLAVFDDEDLCRDLAAFPVPVVTGLGHEDDLTVADLVADHRAATPTAAIVALLPDRHVALRELQQQRQRLRELRSRWLERQHQRLLDRRQALALLTPQRRLQQLRQQLEQRRALLRALSPQRWLKQGLALVSNGQGMTIDGVKGVRKKDTLTLSFHDGSIETVVTQVRPQNSSSTP.

It belongs to the XseA family. In terms of assembly, heterooligomer composed of large and small subunits.

It localises to the cytoplasm. The enzyme catalyses Exonucleolytic cleavage in either 5'- to 3'- or 3'- to 5'-direction to yield nucleoside 5'-phosphates.. Functionally, bidirectionally degrades single-stranded DNA into large acid-insoluble oligonucleotides, which are then degraded further into small acid-soluble oligonucleotides. This Parasynechococcus marenigrum (strain WH8102) protein is Exodeoxyribonuclease 7 large subunit.